A 404-amino-acid polypeptide reads, in one-letter code: Probable glucan endo-1,6-beta-glucosidase B (404 aa).

Positions 1–20 are cleaved as a signal peptide; it reads MTTYQTLFLIPLAISTLVTA. N-linked (GlcNAc...) asparagine glycosylation is found at asparagine 33 and asparagine 130. Glutamate 222 acts as the Proton donor in catalysis. N-linked (GlcNAc...) asparagine glycosylation is found at asparagine 253 and asparagine 299. Glutamate 324 serves as the catalytic Nucleophile.

This sequence belongs to the glycosyl hydrolase 5 (cellulase A) family.

The protein localises to the secreted. The catalysed reaction is Random hydrolysis of (1-&gt;6)-linkages in (1-&gt;6)-beta-D-glucans.. In terms of biological role, beta-glucanases participate in the metabolism of beta-glucan, the main structural component of the cell wall. Acts on lutean, pustulan and 1,6-oligo-beta-D-glucosides. In Aspergillus terreus (strain NIH 2624 / FGSC A1156), this protein is Probable glucan endo-1,6-beta-glucosidase B (exgB).